A 1002-amino-acid polypeptide reads, in one-letter code: Carboxypeptidase Y (1002 aa).

Positions 1-18 are cleaved as a signal peptide; sequence MLMKQTFLYFLLTCVVSA. Residues 19-521 constitute a propeptide that is removed on maturation; the sequence is QFNGYVPPEQ…AYLEMLKAEG (503 aa). 3 disordered regions span residues 51-91, 124-436, and 527-546; these read QEES…TALE, DEDE…NMQS, and AFRD…ADSS. Basic and acidic residues-rich tracts occupy residues 63–81 and 127–143; these read PERD…HEFN and EHVR…EDAP. Positions 144-170 are enriched in basic residues; it reads RRKHGKCKGKGKHHKGKHAKGKGKKSH. A compositionally biased stretch (basic and acidic residues) spans 171-205; it reads PKPEDDSVFFDDERPKHHEFDDEDREFPAHHEPGE. 15 consecutive repeat copies span residues 225–237, 238–250, 251–263, 264–276, 277–289, 290–302, 303–315, 316–328, 329–341, 361–369, 370–378, 379–387, 388–396, 397–405, and 406–414. A 9 X 13 AA tandem repeats of M-H-H-E-P-G-E-H-M-P-P-P-P region spans residues 225–341; the sequence is MHHEPGEHMP…EPGEHMPPPP (117 aa). The segment covering 343–431 has biased composition (basic and acidic residues); sequence KHHELEEHEG…PKEKHNERPE (89 aa). The tract at residues 361-423 is 7 X 9 AA tandem repeats of D-K-E-H-H-K-G-P-K; the sequence is DKEHHKGPKD…KDKEHHQGPK (63 aa). Residues 415-423 form a 2-7; approximate repeat; that stretch reads DKEHHQGPK. Cystine bridges form between Cys627–Cys880, Cys776–Cys789, Cys799–Cys822, Cys806–Cys815, and Cys844–Cys851. A glycan (N-linked (GlcNAc...) asparagine) is linked at Asn659. The active site involves Ser715. Asp921 is an active-site residue. Cys924 provides a ligand contact to substrate. Residue His978 is part of the active site. Met979 is a substrate binding site.

This sequence belongs to the peptidase S10 family. As to quaternary structure, heterodimer of two subunits of 32 kDa and 19 kDa derived from the precursor protein and linked by a disulfide bond.

The protein resides in the vacuole. The catalysed reaction is Release of a C-terminal amino acid with broad specificity.. Functionally, involved in degradation of small peptides. Digests preferentially peptides containing an aliphatic or hydrophobic residue in P1' position, as well as methionine, leucine or phenylalanine in P1 position of ester substrate. The chain is Carboxypeptidase Y (cpy1) from Schizosaccharomyces pombe (strain 972 / ATCC 24843) (Fission yeast).